The following is a 328-amino-acid chain: Malate dehydrogenase (328 aa).

11–17 (GAAGQIG) provides a ligand contact to NAD(+). Positions 92 and 98 each coordinate substrate. Residues Asn105, Gln112, and 129–131 (VGN) contribute to the NAD(+) site. Substrate contacts are provided by Asn131 and Arg162. The active-site Proton acceptor is His187.

It belongs to the LDH/MDH superfamily. MDH type 2 family.

It carries out the reaction (S)-malate + NAD(+) = oxaloacetate + NADH + H(+). Catalyzes the reversible oxidation of malate to oxaloacetate. This is Malate dehydrogenase from Coxiella burnetii (strain RSA 493 / Nine Mile phase I).